The primary structure comprises 336 residues: Ribosomal RNA large subunit methyltransferase F (336 aa).

The interval 1 to 24 is disordered; it reads MPRPTSPHPDAERKSASPLHPRNR.

The protein belongs to the methyltransferase superfamily. METTL16/RlmF family.

Its subcellular location is the cytoplasm. The enzyme catalyses adenosine(1618) in 23S rRNA + S-adenosyl-L-methionine = N(6)-methyladenosine(1618) in 23S rRNA + S-adenosyl-L-homocysteine + H(+). Its function is as follows. Specifically methylates the adenine in position 1618 of 23S rRNA. This Pseudomonas aeruginosa (strain LESB58) protein is Ribosomal RNA large subunit methyltransferase F.